The chain runs to 268 residues: MYVGYVLDKDSPVYPGPARPSSLGLGPPTYAPPGPAPAPPQYPDFAGYTHVEPAPAPPPTWAAPFPAPKDDWAAAYGPGPTASAASPAPLAFGPPPDFSPVPAPPGPGPGILAQSLGAPGAPSSPGAPRRTPYEWMRRSVAAAGGGGSGKTRTKDKYRVVYTDHQRLELEKEFHYSRYITIRRKSELAANLGLTERQVKIWFQNRRAKERKVNKKKQQQQQPLPPTQLPLPLDGTPTPSGPPLGSLCPTNAGLLGTPSPVPVKEEFLP.

A disordered region spans residues 1 to 152 (MYVGYVLDKD…AGGGGSGKTR (152 aa)). Pro residues-rich tracts occupy residues 29-42 (TYAP…PPQY) and 54-67 (APAP…PFPA). A compositionally biased stretch (low complexity) spans 73 to 91 (AAAYGPGPTASAASPAPLA). Positions 92–108 (FGPPPDFSPVPAPPGPG) are enriched in pro residues. The segment covering 115-128 (SLGAPGAPSSPGAP) has biased composition (low complexity). A DNA-binding region (homeobox) is located at residues 154-213 (KDKYRVVYTDHQRLELEKEFHYSRYITIRRKSELAANLGLTERQVKIWFQNRRAKERKVN). The tract at residues 157-178 (YRVVYTDHQRLELEKEFHYSRY) is interaction with DNA. An interaction with 5-mCpG DNA region spans residues 196 to 207 (RQVKIWFQNRRA). The tract at residues 209-268 (ERKVNKKKQQQQQPLPPTQLPLPLDGTPTPSGPPLGSLCPTNAGLLGTPSPVPVKEEFLP) is disordered. Residues 229 to 246 (PLPLDGTPTPSGPPLGSL) show a composition bias toward low complexity.

It belongs to the Caudal homeobox family. As to expression, intestinal epithelium.

It is found in the nucleus. In terms of biological role, plays a role in transcriptional regulation. Involved in activated KRAS-mediated transcriptional activation of PRKD1 in colorectal cancer (CRC) cells. Binds to the PRKD1 promoter in colorectal cancer (CRC) cells. Could play a role in the terminal differentiation of the intestine. Binds preferentially to methylated DNA. The protein is Homeobox protein CDX-1 (Cdx1) of Mus musculus (Mouse).